We begin with the raw amino-acid sequence, 463 residues long: L-seryl-tRNA(Sec) selenium transferase (463 aa).

Lys-295 carries the post-translational modification N6-(pyridoxal phosphate)lysine.

This sequence belongs to the SelA family. As to quaternary structure, homodecamer; pentamer of dimers. Binds only one seryl-tRNA(Sec) per dimer. It depends on pyridoxal 5'-phosphate as a cofactor.

The protein localises to the cytoplasm. It carries out the reaction L-seryl-tRNA(Sec) + selenophosphate + H(+) = L-selenocysteinyl-tRNA(Sec) + phosphate. The protein operates within aminoacyl-tRNA biosynthesis; selenocysteinyl-tRNA(Sec) biosynthesis; selenocysteinyl-tRNA(Sec) from L-seryl-tRNA(Sec) (bacterial route): step 1/1. In terms of biological role, converts seryl-tRNA(Sec) to selenocysteinyl-tRNA(Sec) required for selenoprotein biosynthesis. The sequence is that of L-seryl-tRNA(Sec) selenium transferase from Photorhabdus laumondii subsp. laumondii (strain DSM 15139 / CIP 105565 / TT01) (Photorhabdus luminescens subsp. laumondii).